The primary structure comprises 344 residues: Fructose-bisphosphate aldolase (344 aa).

A D-glyceraldehyde 3-phosphate-binding site is contributed by serine 53. Aspartate 95 acts as the Proton donor in catalysis. Residues histidine 96, aspartate 131, glutamate 161, and histidine 212 each contribute to the Zn(2+) site. Residue glycine 213 coordinates dihydroxyacetone phosphate. Histidine 252 provides a ligand contact to Zn(2+). Dihydroxyacetone phosphate-binding positions include 253–255 (GGS) and 274–277 (NVDT).

The protein belongs to the class II fructose-bisphosphate aldolase family. Requires Zn(2+) as cofactor.

It carries out the reaction beta-D-fructose 1,6-bisphosphate = D-glyceraldehyde 3-phosphate + dihydroxyacetone phosphate. Its pathway is carbohydrate degradation; glycolysis; D-glyceraldehyde 3-phosphate and glycerone phosphate from D-glucose: step 4/4. Functionally, catalyzes the aldol condensation of dihydroxyacetone phosphate (DHAP or glycerone-phosphate) with glyceraldehyde 3-phosphate (G3P) to form fructose 1,6-bisphosphate (FBP) in gluconeogenesis and the reverse reaction in glycolysis. This chain is Fructose-bisphosphate aldolase (fba), found in Corynebacterium glutamicum (strain ATCC 13032 / DSM 20300 / JCM 1318 / BCRC 11384 / CCUG 27702 / LMG 3730 / NBRC 12168 / NCIMB 10025 / NRRL B-2784 / 534).